Here is a 113-residue protein sequence, read N- to C-terminus: MPFQSSVGDYQTVATLETFGFLPPMTQEEIYDQIAYIIAQGWSPVIEHVHPSGSMQTYWSYWKLPFFGEKDLNLVVSELEACHRAYPDHHVRIIGYDAYTQSQGTAFAVFQGR.

The protein belongs to the RuBisCO small chain family. Heterohexadecamer of 8 large and 8 small subunits. Forms a CsoS2-CsoS1-RuBisCO complex.

The protein localises to the carboxysome. Its function is as follows. RuBisCO catalyzes two reactions: the carboxylation of D-ribulose 1,5-bisphosphate, the primary event in carbon dioxide fixation, as well as the oxidative fragmentation of the pentose substrate in the photorespiration process. Both reactions occur simultaneously and in competition at the same active site. Although the small subunit is not catalytic it is essential for maximal activity. There are estimated to be 152 RuBisCO holoenzymes per carboxysome. The sequence is that of Ribulose bisphosphate carboxylase small subunit from Prochlorococcus marinus subsp. pastoris (strain CCMP1986 / NIES-2087 / MED4).